Here is a 503-residue protein sequence, read N- to C-terminus: Putative (R)-citramalate synthase CimA (503 aa).

The 249-residue stretch at 9–257 (IRFFDTTLRD…DTGIATEELY (249 aa)) folds into the Pyruvate carboxyltransferase domain.

Belongs to the alpha-IPM synthase/homocitrate synthase family. In terms of assembly, homodimer.

The catalysed reaction is pyruvate + acetyl-CoA + H2O = (3R)-citramalate + CoA + H(+). It functions in the pathway amino-acid biosynthesis; L-isoleucine biosynthesis; 2-oxobutanoate from pyruvate: step 1/3. Its function is as follows. Catalyzes the condensation of pyruvate and acetyl-coenzyme A to form (R)-citramalate. The protein is Putative (R)-citramalate synthase CimA of Methanoculleus marisnigri (strain ATCC 35101 / DSM 1498 / JR1).